The chain runs to 201 residues: Cell division protein SepF (201 aa).

The span at 27-38 shows a compositional bias: basic and acidic residues; that stretch reads VQERTSVQRDSR. The interval 27–99 is disordered; sequence VQERTSVQRD…PRIQNKDSVR (73 aa). Composition is skewed to polar residues over residues 43 to 54 and 82 to 92; these read QEASQRSHMTNS and DNSYQQATPRI.

Belongs to the SepF family. As to quaternary structure, homodimer. Interacts with FtsZ.

Its subcellular location is the cytoplasm. Cell division protein that is part of the divisome complex and is recruited early to the Z-ring. Probably stimulates Z-ring formation, perhaps through the cross-linking of FtsZ protofilaments. Its function overlaps with FtsA. This chain is Cell division protein SepF, found in Streptococcus agalactiae serotype III (strain NEM316).